Reading from the N-terminus, the 226-residue chain is Enolase-phosphatase E1 (226 aa).

Belongs to the HAD-like hydrolase superfamily. MasA/MtnC family. In terms of assembly, monomer. Mg(2+) serves as cofactor.

It carries out the reaction 5-methylsulfanyl-2,3-dioxopentyl phosphate + H2O = 1,2-dihydroxy-5-(methylsulfanyl)pent-1-en-3-one + phosphate. The protein operates within amino-acid biosynthesis; L-methionine biosynthesis via salvage pathway; L-methionine from S-methyl-5-thio-alpha-D-ribose 1-phosphate: step 3/6. Its pathway is amino-acid biosynthesis; L-methionine biosynthesis via salvage pathway; L-methionine from S-methyl-5-thio-alpha-D-ribose 1-phosphate: step 4/6. Bifunctional enzyme that catalyzes the enolization of 2,3-diketo-5-methylthiopentyl-1-phosphate (DK-MTP-1-P) into the intermediate 2-hydroxy-3-keto-5-methylthiopentenyl-1-phosphate (HK-MTPenyl-1-P), which is then dephosphorylated to form the acireductone 1,2-dihydroxy-3-keto-5-methylthiopentene (DHK-MTPene). This chain is Enolase-phosphatase E1, found in Shewanella pealeana (strain ATCC 700345 / ANG-SQ1).